A 626-amino-acid chain; its full sequence is MVIWNNDDDDFLEIDNFQSSPRSSPIHAMQCRVENLAGVAVTTSSLSSPTETTDLVQMGFSDEVFATLFDMGFPVEMISRAIKETGPNVETSVIIDTISKYSSDCEAGSSKSKAIDHFLAMGFDEEKVVKAIQEHGEDNMEAIANALLSCPEAKKLPAAVEEEDGIDWSSSDDDTNYTDMLNSDDEKDPNSNENGSKIRSLVKMGFSELEASLAVERCGENVDIAELTDFLCAAQMAREFSEFYTEHEEQKPRHNIKKRRFESKGEPRSSVDDEPIRLPNPMIGFGVPNEPGLITHRSLPELARGPPFFYYENVALTPKGVWETISRHLFEIPPEFVDSKYFCVAARKRGYIHNLPINNRFQIQPPPKYTIHDAFPLSKRWWPEWDKRTKLNCILTCTGSAQLTNRIRVALEPYNEEPEPPKHVQRYVIDQCKKWNLVWVGKNKAAPLEPDEMESILGFPKNHTRGGGMSRTERFKSLGNSFQVDTVAYHLSVLKPIFPHGINVLSLFTGIGGGEVALHRLQIKMKLVVSVEISKVNRNILKDFWEQTNQTGELIEFSDIQHLTNDTIEGLMEKYGGFDLVIGGSPCNNLAGGNRVSRVGLEGDQSSLFFEYCRILEVVRARMRGS.

UBA domains follow at residues 59 to 101 (GFSD…ISKY) and 109 to 150 (SSKS…LLSC). The segment covering 160 to 187 (VEEEDGIDWSSSDDDTNYTDMLNSDDEK) has biased composition (acidic residues). Disordered regions lie at residues 160 to 196 (VEEEDGIDWSSSDDDTNYTDMLNSDDEKDPNSNENGS) and 245 to 282 (TEHEEQKPRHNIKKRRFESKGEPRSSVDDEPIRLPNPM). Positions 190–232 (NSNENGSKIRSLVKMGFSELEASLAVERCGENVDIAELTDFLC) constitute a UBA 3 domain. Basic and acidic residues predominate over residues 262-276 (ESKGEPRSSVDDEPI). An SAM-dependent MTase DRM-type domain is found at 295-626 (THRSLPELAR…EVVRARMRGS (332 aa)).

This sequence belongs to the class I-like SAM-binding methyltransferase superfamily. DRM-methyltransferase family. In terms of assembly, interacts with RDM1. In terms of tissue distribution, expressed in roots, inflorescences and at lower levels in leaves.

The protein resides in the nucleus. The protein localises to the nucleoplasm. The enzyme catalyses a 2'-deoxycytidine in DNA + S-adenosyl-L-methionine = a 5-methyl-2'-deoxycytidine in DNA + S-adenosyl-L-homocysteine + H(+). In terms of biological role, involved in de novo DNA methylation. Controls asymmetric and CpNpG methylation. Required for FWA gene silencing but not for the maintenance of SUP gene silencing. Functionally redundant to CMT3 to maintain non-CpG methylation. Involved in RNA-directed DNA methylation (RdDM). Acts as major DNA methyltransferase in the RdDM pathway, and is essential for RNA-directed de novo DNA methylation of cytosines in all sequence contexts. Associates with long non-coding RNA (lncRNA) produced by RNA polymerase V (Pol V). This association is dependent on AGO4 and IDN2, and results in DNA methylation of RdDM target loci. In Arabidopsis thaliana (Mouse-ear cress), this protein is DNA (cytosine-5)-methyltransferase DRM2 (DRM2).